An 892-amino-acid chain; its full sequence is Gamma-tubulin small complex component GCP3 (892 aa).

Belongs to the TUBGCP family. Component of the gamma-tubulin small complex (gamma-TuSC) composed of tubulin gamma chain, gamma-tubulin complex protein 2 (GCP2) and gamma-tubulin complex protein 3 (GCP3). Interacts with tubulin gamma chain.

Its subcellular location is the cytoplasm. The protein resides in the cytoskeleton. It is found in the flagellum axoneme. It localises to the flagellum basal body. Functionally, component of the gamma-tubulin small complex (gamma-TuSC) involved in microtubule (MT) nucleation for the formation of median bodies and in the biogenesis of flagella. Gamma-TuSC may be required for the correct positioning of EB1 within the trophozoites. The polypeptide is Gamma-tubulin small complex component GCP3 (Giardia intestinalis (strain ATCC 50803 / WB clone C6) (Giardia lamblia)).